The sequence spans 545 residues: ATP synthase subunit alpha (545 aa).

An ATP-binding site is contributed by 174 to 181 (GDRKTGKT).

The protein belongs to the ATPase alpha/beta chains family. As to quaternary structure, F-type ATPases have 2 components, CF(1) - the catalytic core - and CF(0) - the membrane proton channel. CF(1) has five subunits: alpha(3), beta(3), gamma(1), delta(1), epsilon(1). CF(0) has three main subunits: a(1), b(2) and c(9-12). The alpha and beta chains form an alternating ring which encloses part of the gamma chain. CF(1) is attached to CF(0) by a central stalk formed by the gamma and epsilon chains, while a peripheral stalk is formed by the delta and b chains.

It is found in the cell membrane. The enzyme catalyses ATP + H2O + 4 H(+)(in) = ADP + phosphate + 5 H(+)(out). Functionally, produces ATP from ADP in the presence of a proton gradient across the membrane. The alpha chain is a regulatory subunit. This chain is ATP synthase subunit alpha, found in Cutibacterium acnes (strain DSM 16379 / KPA171202) (Propionibacterium acnes).